Here is a 182-residue protein sequence, read N- to C-terminus: Pyruvoyl-dependent arginine decarboxylase (182 aa).

The residue at position 44 (S44) is a Pyruvic acid (Ser).

The protein belongs to the PdaD family. Requires pyruvate as cofactor.

It carries out the reaction L-arginine + H(+) = agmatine + CO2. This chain is Pyruvoyl-dependent arginine decarboxylase, found in Picrophilus torridus (strain ATCC 700027 / DSM 9790 / JCM 10055 / NBRC 100828 / KAW 2/3).